Reading from the N-terminus, the 702-residue chain is Heparin-sulfate lyase (702 aa).

The signal sequence occupies residues 1-17 (MKNIFFICFCALFAFSG). Tyr314 acts as the Proton acceptor in catalysis.

The protein belongs to the polysaccharide lyase 12 family.

The protein localises to the periplasm. The enzyme catalyses Elimination of sulfate, appears to act on linkages between N-acetyl-D-glucosamine and uronate. Product is an unsaturated sugar.. Functionally, specifically cleaves heparan sulfate-rich regions of acidic polysaccharides. Does not act on N,O-desulfated glucosamine or N-acetyl-O-sulfated glucosamine linkages. Functions in cleaving metazoan heparan sulfate and providing carbon, nitrogen and sulfate sources for microorganisms. The polypeptide is Heparin-sulfate lyase (hepC) (Bacteroides thetaiotaomicron (strain ATCC 29148 / DSM 2079 / JCM 5827 / CCUG 10774 / NCTC 10582 / VPI-5482 / E50)).